The following is a 389-amino-acid chain: Chalcone synthase 6 (389 aa).

Residue cysteine 164 is part of the active site.

The protein belongs to the thiolase-like superfamily. Chalcone/stilbene synthases family.

The enzyme catalyses (E)-4-coumaroyl-CoA + 3 malonyl-CoA + 3 H(+) = 2',4,4',6'-tetrahydroxychalcone + 3 CO2 + 4 CoA. The protein operates within secondary metabolite biosynthesis; flavonoid biosynthesis. In terms of biological role, the primary product of this enzyme is 4,2',4',6'-tetrahydroxychalcone (also termed naringenin-chalcone or chalcone) which can under specific conditions spontaneously isomerize into naringenin. This Trifolium subterraneum (Subterranean clover) protein is Chalcone synthase 6 (CHS6).